Reading from the N-terminus, the 276-residue chain is Energy-coupling factor transporter ATP-binding protein EcfA2 (276 aa).

The ABC transporter domain maps to 1–233 (MKTPFERLAL…GEEMAGWGLD (233 aa)). 27–34 (GHTGSGKS) serves as a coordination point for ATP. Glu-158 functions as the Proton acceptor in the catalytic mechanism.

This sequence belongs to the ABC transporter superfamily. Energy-coupling factor EcfA family. As to quaternary structure, forms a stable energy-coupling factor (ECF) transporter complex composed of 2 membrane-embedded substrate-binding proteins (S component), 2 ATP-binding proteins (A component) and 2 transmembrane proteins (T component).

Its subcellular location is the cell membrane. Functionally, ATP-binding (A) component of a common energy-coupling factor (ECF) ABC-transporter complex. Unlike classic ABC transporters this ECF transporter provides the energy necessary to transport a number of different substrates. The chain is Energy-coupling factor transporter ATP-binding protein EcfA2 from Bacillus subtilis (strain 168).